The following is a 115-amino-acid chain: Large ribosomal subunit protein bL19 (115 aa).

Belongs to the bacterial ribosomal protein bL19 family.

This protein is located at the 30S-50S ribosomal subunit interface and may play a role in the structure and function of the aminoacyl-tRNA binding site. The polypeptide is Large ribosomal subunit protein bL19 (Lawsonia intracellularis (strain PHE/MN1-00)).